The sequence spans 209 residues: Putative 3-methyladenine DNA glycosylase (209 aa).

It belongs to the DNA glycosylase MPG family.

The protein is Putative 3-methyladenine DNA glycosylase of Deinococcus geothermalis (strain DSM 11300 / CIP 105573 / AG-3a).